The chain runs to 212 residues: ATP-dependent dethiobiotin synthetase BioD (212 aa).

13 to 18 (GIGKTV) is a binding site for ATP. Mg(2+) is bound at residue T17. K33 is an active-site residue. Substrate is bound at residue S37. Residue E100 participates in Mg(2+) binding. Residues 100 to 103 (EGAG), 160 to 161 (IS), and 184 to 186 (PLL) contribute to the ATP site.

This sequence belongs to the dethiobiotin synthetase family. As to quaternary structure, homodimer. Mg(2+) is required as a cofactor.

The protein localises to the cytoplasm. The catalysed reaction is (7R,8S)-7,8-diammoniononanoate + CO2 + ATP = (4R,5S)-dethiobiotin + ADP + phosphate + 3 H(+). It functions in the pathway cofactor biosynthesis; biotin biosynthesis; biotin from 7,8-diaminononanoate: step 1/2. Catalyzes a mechanistically unusual reaction, the ATP-dependent insertion of CO2 between the N7 and N8 nitrogen atoms of 7,8-diaminopelargonic acid (DAPA, also called 7,8-diammoniononanoate) to form a ureido ring. This is ATP-dependent dethiobiotin synthetase BioD from Brucella abortus (strain S19).